Reading from the N-terminus, the 208-residue chain is MGNGMNKVIDGLYLGNIRDSENRDSLSRNGITHILSVCNNAKPVLEDMTYLCINAADASSQNLSQHFKESIRFIHECRLNGGACLVHCLAGVSRSTTVVVAYLMTVTSYGWQECLTAVKAVRSFVGPNYGFQQQLQEFQMKQVSEYQAWLRASYRSSPFKDQEQVEALLSLFAEQQQQGQQNDPEWMSQGSRIYPLSYNQYSASGSNR.

The region spanning 4–144 (GMNKVIDGLY…LQEFQMKQVS (141 aa)) is the Tyrosine-protein phosphatase domain. The active-site Phosphocysteine intermediate is the Cys-88.

It belongs to the protein-tyrosine phosphatase family. Non-receptor class dual specificity subfamily.

Its subcellular location is the cytoplasm. The protein localises to the nucleus. The catalysed reaction is O-phospho-L-tyrosyl-[protein] + H2O = L-tyrosyl-[protein] + phosphate. It catalyses the reaction O-phospho-L-seryl-[protein] + H2O = L-seryl-[protein] + phosphate. It carries out the reaction O-phospho-L-threonyl-[protein] + H2O = L-threonyl-[protein] + phosphate. In terms of biological role, activates the Jnk signaling pathway. Dephosphorylates and deactivates p38 and stress-activated protein kinase/c-Jun N-terminal kinase (SAPK/JNK). This chain is Dual specificity protein phosphatase 22-A, found in Danio rerio (Zebrafish).